Here is a 552-residue protein sequence, read N- to C-terminus: Chaperonin GroEL (552 aa).

ATP-binding positions include 30 to 33 (TLGP), Lys51, 87 to 91 (DGTTT), Gly415, and Asp496.

This sequence belongs to the chaperonin (HSP60) family. Forms a cylinder of 14 subunits composed of two heptameric rings stacked back-to-back. Interacts with the co-chaperonin GroES.

Its subcellular location is the cytoplasm. The enzyme catalyses ATP + H2O + a folded polypeptide = ADP + phosphate + an unfolded polypeptide.. Functionally, together with its co-chaperonin GroES, plays an essential role in assisting protein folding. The GroEL-GroES system forms a nano-cage that allows encapsulation of the non-native substrate proteins and provides a physical environment optimized to promote and accelerate protein folding. This chain is Chaperonin GroEL, found in Paramagnetospirillum magneticum (strain ATCC 700264 / AMB-1) (Magnetospirillum magneticum).